The primary structure comprises 288 residues: Protoheme IX farnesyltransferase (288 aa).

9 helical membrane passes run 8–28 (ATKPGIVLSNLMSFIGGFLLA), 35–55 (YLIFLVTLLGVLFIVTAGCVL), 80–100 (ISILTCLIYALICSIIGIYLL), 107–127 (LTMLLAIIGLIVYVGIYTKCM), 132–152 (IYSTIIGSFSGAIPPVIGYCA), 162–182 (LLLLLIFCLWQMPHSYAIAIL), 208–228 (IVIYIVAFIVTTILLNISGYT), 229–249 (TSYQYLIVTNFINFWWLYLAL), and 266–286 (FIFSIIAITSLSLMMSLDSIF).

This sequence belongs to the UbiA prenyltransferase family. Protoheme IX farnesyltransferase subfamily.

The protein localises to the cell membrane. It catalyses the reaction heme b + (2E,6E)-farnesyl diphosphate + H2O = Fe(II)-heme o + diphosphate. The protein operates within porphyrin-containing compound metabolism; heme O biosynthesis; heme O from protoheme: step 1/1. Functionally, converts heme B (protoheme IX) to heme O by substitution of the vinyl group on carbon 2 of heme B porphyrin ring with a hydroxyethyl farnesyl side group. The polypeptide is Protoheme IX farnesyltransferase (Baumannia cicadellinicola subsp. Homalodisca coagulata).